Here is a 488-residue protein sequence, read N- to C-terminus: Histamine H1 receptor (488 aa).

Residues 1–29 (MSLPNTSSASEDKMCEGNRTAMASPQLLP) are Extracellular-facing. 2 N-linked (GlcNAc...) asparagine glycosylation sites follow: N5 and N18. Residues 30-50 (LVVVLSSISLVTVGLNLLVLY) traverse the membrane as a helical segment. Residues 51–64 (AVRSERKLHTVGNL) are Cytoplasmic-facing. A helical transmembrane segment spans residues 65–89 (YIVSLSVADLIVGAVVMPMNILYLI). Residues 90 to 97 (MTKWSLGR) are Extracellular-facing. Residues 98–123 (PLCLFWLSMDYVASTASIFSVFILCI) form a helical membrane-spanning segment. C100 and C180 are joined by a disulfide. Histamine is bound by residues D107 and T112. Positions 107-112 (DYVAST) are important for agonist binding. Residues 124–144 (DRYRSVQQPLRYLRYRTKTRA) lie on the Cytoplasmic side of the membrane. A phosphothreonine mark is found at T140 and T142. The helical transmembrane segment at 145–164 (SATILGAWFLSFLWVIPILG) threads the bilayer. The Extracellular portion of the chain corresponds to 165 to 188 (WHHFTPLAPELREDKCETDFYNVT). Residues 189–211 (WFKIMTAIINFYLPTLLMLWFYV) traverse the membrane as a helical segment. N198 is a binding site for histamine. Over 212–417 (KIYKAVRRHC…LNRERKAAKQ (206 aa)) the chain is Cytoplasmic. S230 carries the post-translational modification Phosphoserine. Positions 245–337 (KEGAKKPGKE…SQPKMDEQSL (93 aa)) are disordered. Residues 322–337 (ANDQTLSQPKMDEQSL) are compositionally biased toward polar residues. Phosphoserine is present on residues S344, S347, S381, S383, S397, and S399. A helical membrane pass occupies residues 418–441 (LGCIMAAFILCWIPYFIFFMVIAF). The tract at residues 425–429 (FILCW) is important for agonist binding. Histamine is bound at residue Y432. C442 and C445 are disulfide-bonded. The Extracellular portion of the chain corresponds to 442-447 (CNSCCS). A helical transmembrane segment spans residues 448–470 (EPVHMFTIWLGYINSTLNPLIYP). Topologically, residues 471–488 (LCNENFKKTFKKILHIRS) are cytoplasmic.

Belongs to the G-protein coupled receptor 1 family. In terms of processing, phosphorylation at sites in the second and third cytoplasmic loops independently contribute to agonist-induced receptor down-regulation.

The protein localises to the cell membrane. Functionally, G-protein-coupled receptor for histamine, a biogenic amine that functions as an immune modulator and a neurotransmitter. Through the H1 receptor, histamine mediates the contraction of smooth muscles and increases capillary permeability due to contraction of terminal venules. Also mediates neurotransmission in the central nervous system and thereby regulates circadian rhythms, emotional and locomotor activities as well as cognitive functions. This chain is Histamine H1 receptor, found in Mus musculus (Mouse).